A 349-amino-acid chain; its full sequence is MVRAKRKLDHIEYALSTGQSRTHGFHDIEFVHQSLPNSSYETITCETKIGELSLSSPIFINAMTGGGGEKTLHINEQLAYVAKHHNLAMAVGSQMAALKDESEAASYKIIRKVNPNGIFFANLGSEATVEQAERAVDMVGANALQIHLNVIQELTMPEGDRDFTGVLQRIEEIVLNSKVPVIVKEVGFGMSKETMQQLASVGVTAIDIGGQGGTNFAAVENERRQRMLSYFNNWGIQTATSIIEATSTNNNLSFIASGGIQTALDVAKAIALGANTTAFAGYFLRILMEDGIEKLVDEIDLLHTDLKFIMTALGAKTIEELQSVPLVIKGETYHWLTQRGIDTTHYSRR.

6–7 (RK) lines the substrate pocket. FMN-binding positions include 62-64 (AMT), serine 93, and asparagine 122. Glutamine 152 contacts substrate. Glutamate 153 serves as a coordination point for Mg(2+). Residues lysine 184, threonine 214, 258 to 259 (GG), and 280 to 281 (AG) contribute to the FMN site.

The protein belongs to the IPP isomerase type 2 family. As to quaternary structure, homooctamer. Dimer of tetramers. The cofactor is FMN. NADPH serves as cofactor. Requires Mg(2+) as cofactor.

Its subcellular location is the cytoplasm. The catalysed reaction is isopentenyl diphosphate = dimethylallyl diphosphate. Functionally, involved in the biosynthesis of isoprenoids. Catalyzes the 1,3-allylic rearrangement of the homoallylic substrate isopentenyl (IPP) to its allylic isomer, dimethylallyl diphosphate (DMAPP). In Bacillus anthracis (strain A0248), this protein is Isopentenyl-diphosphate delta-isomerase.